A 252-amino-acid polypeptide reads, in one-letter code: Neurexophilin-3 (252 aa).

The first 22 residues, 1–22 (MQLTRCCFVFLVQGSLYLVICG), serve as a signal peptide directing secretion. Residues 23 to 75 (QDDGPPGSEDPERDDHEGQPRPRVPRKRGHISPKSRPMANSTLLGLLAPPGEA) are II. A disordered region spans residues 27–58 (PPGSEDPERDDHEGQPRPRVPRKRGHISPKSR). A compositionally biased stretch (basic residues) spans 45–55 (RVPRKRGHISP). N-linked (GlcNAc...) asparagine glycans are attached at residues Asn62, Asn127, Asn137, and Asn143. Residues 76-157 (WGILGQPPNR…LVPPSKAVEF (82 aa)) form an III region. Residues 158–166 (HQEQQIFIE) form an IV (linker domain) region. The v (Cys-rich) stretch occupies residues 167–252 (AKASKIFNCR…HSDTPYYPSG (86 aa)).

The protein belongs to the neurexophilin family. Post-translationally, may be proteolytically processed at the boundary between the N-terminal non-conserved and the central conserved domain in neuron-like cells. In terms of tissue distribution, highest level in brain.

The protein localises to the secreted. Its function is as follows. May be signaling molecules that resemble neuropeptides. Ligand for alpha-neurexins. This chain is Neurexophilin-3 (NXPH3), found in Homo sapiens (Human).